Here is a 202-residue protein sequence, read N- to C-terminus: Probable molybdenum cofactor guanylyltransferase (202 aa).

Residues 9–11 (VAG), K22, N50, D77, and D102 each bind GTP. Residue D102 participates in Mg(2+) binding.

The protein belongs to the MobA family. Requires Mg(2+) as cofactor.

The protein resides in the cytoplasm. It carries out the reaction Mo-molybdopterin + GTP + H(+) = Mo-molybdopterin guanine dinucleotide + diphosphate. Its function is as follows. Transfers a GMP moiety from GTP to Mo-molybdopterin (Mo-MPT) cofactor (Moco or molybdenum cofactor) to form Mo-molybdopterin guanine dinucleotide (Mo-MGD) cofactor. This chain is Probable molybdenum cofactor guanylyltransferase, found in Natronomonas pharaonis (strain ATCC 35678 / DSM 2160 / CIP 103997 / JCM 8858 / NBRC 14720 / NCIMB 2260 / Gabara) (Halobacterium pharaonis).